Consider the following 556-residue polypeptide: 2-succinyl-5-enolpyruvyl-6-hydroxy-3-cyclohexene-1-carboxylate synthase (556 aa).

Belongs to the TPP enzyme family. MenD subfamily. In terms of assembly, homodimer. Mg(2+) is required as a cofactor. Requires Mn(2+) as cofactor. Thiamine diphosphate serves as cofactor.

It catalyses the reaction isochorismate + 2-oxoglutarate + H(+) = 5-enolpyruvoyl-6-hydroxy-2-succinyl-cyclohex-3-ene-1-carboxylate + CO2. The protein operates within quinol/quinone metabolism; 1,4-dihydroxy-2-naphthoate biosynthesis; 1,4-dihydroxy-2-naphthoate from chorismate: step 2/7. Its pathway is quinol/quinone metabolism; menaquinone biosynthesis. Catalyzes the thiamine diphosphate-dependent decarboxylation of 2-oxoglutarate and the subsequent addition of the resulting succinic semialdehyde-thiamine pyrophosphate anion to isochorismate to yield 2-succinyl-5-enolpyruvyl-6-hydroxy-3-cyclohexene-1-carboxylate (SEPHCHC). This Escherichia coli O7:K1 (strain IAI39 / ExPEC) protein is 2-succinyl-5-enolpyruvyl-6-hydroxy-3-cyclohexene-1-carboxylate synthase.